The following is a 467-amino-acid chain: Gamma-aminobutyric acid receptor subunit gamma-3 (467 aa).

The signal sequence occupies residues 1 to 17 (MAAKLLLLLCLFSGLHA). Topologically, residues 18-256 (RSRRVEEDDS…FELSRRMGYF (239 aa)) are extracellular. Asn110 carries an N-linked (GlcNAc...) asparagine glycan. Cys171 and Cys185 are oxidised to a cystine. N-linked (GlcNAc...) asparagine glycosylation occurs at Asn228. Residues 257-277 (TIQTYIPCILTVVLSWVSFWI) form a helical membrane-spanning segment. Residues 278-283 (KKDATP) lie on the Cytoplasmic side of the membrane. The helical transmembrane segment at 284–303 (ARTTLGITTVLTMTTLSTIA) threads the bilayer. At 304-311 (RKSLPRVS) the chain is on the extracellular side. The chain crosses the membrane as a helical span at residues 312–332 (YVTAMDLFVTVCFLFVFAALM). Residues 333 to 446 (EYATLNYYSS…DVSELDSYSR (114 aa)) lie on the Cytoplasmic side of the membrane. A helical transmembrane segment spans residues 447 to 467 (VFFPTSFLLFNLVYWVGYLYL).

This sequence belongs to the ligand-gated ion channel (TC 1.A.9) family. Gamma-aminobutyric acid receptor (TC 1.A.9.5) subfamily. GABRG3 sub-subfamily. Heteropentamer, formed by a combination of alpha (GABRA1-6), beta (GABRB1-3), gamma (GABRG1-3), delta (GABRD), epsilon (GABRE), rho (GABRR1-3), pi (GABRP) and theta (GABRQ) chains, each subunit exhibiting distinct physiological and pharmacological properties. In terms of processing, may be palmitoylated. As to expression, expressed in brain.

Its subcellular location is the postsynaptic cell membrane. The protein localises to the cell membrane. It catalyses the reaction chloride(in) = chloride(out). With respect to regulation, allosterically potentiated by alphaxalone. Allosterically inhibited by pregnenolone sulfate. Inhibited by zinc and lanthanum. Functionally, gamma subunit of the heteropentameric ligand-gated chloride channel gated by gamma-aminobutyric acid (GABA), a major inhibitory neurotransmitter in the brain. GABA-gated chloride channels, also named GABA(A) receptors (GABAAR), consist of five subunits arranged around a central pore and contain GABA active binding site(s) located at the alpha and beta subunit interface(s). When activated by GABA, GABAARs selectively allow the flow of chloride across the cell membrane down their electrochemical gradient. In Rattus norvegicus (Rat), this protein is Gamma-aminobutyric acid receptor subunit gamma-3.